Reading from the N-terminus, the 407-residue chain is Formate-dependent phosphoribosylglycinamide formyltransferase (407 aa).

N(1)-(5-phospho-beta-D-ribosyl)glycinamide is bound by residues 28-29 (EL) and E88. ATP contacts are provided by residues R121, K162, 167–172 (SSGKGQ), 202–205 (EGFI), and E210. In terms of domain architecture, ATP-grasp spans 126 to 320 (RLAAEELGVA…EFELHAKAIL (195 aa)). The Mg(2+) site is built by E279 and E291. N(1)-(5-phospho-beta-D-ribosyl)glycinamide-binding positions include D298, K367, and 374–375 (RR).

The protein belongs to the PurK/PurT family. As to quaternary structure, homodimer.

It carries out the reaction N(1)-(5-phospho-beta-D-ribosyl)glycinamide + formate + ATP = N(2)-formyl-N(1)-(5-phospho-beta-D-ribosyl)glycinamide + ADP + phosphate + H(+). Its pathway is purine metabolism; IMP biosynthesis via de novo pathway; N(2)-formyl-N(1)-(5-phospho-D-ribosyl)glycinamide from N(1)-(5-phospho-D-ribosyl)glycinamide (formate route): step 1/1. Its function is as follows. Involved in the de novo purine biosynthesis. Catalyzes the transfer of formate to 5-phospho-ribosyl-glycinamide (GAR), producing 5-phospho-ribosyl-N-formylglycinamide (FGAR). Formate is provided by PurU via hydrolysis of 10-formyl-tetrahydrofolate. The protein is Formate-dependent phosphoribosylglycinamide formyltransferase of Herminiimonas arsenicoxydans.